We begin with the raw amino-acid sequence, 136 residues long: Secreted RxLR effector protein 15 (136 aa).

Residues 1–22 (MRGHSALMMAVVTLAAVSSGAA) form the signal peptide. Residues 47-50 (RLLR) carry the RxLR motif.

Belongs to the RxLR effector family.

The protein localises to the secreted. Its subcellular location is the host nucleus. The protein resides in the host cytoplasm. Functionally, effector that completely suppresses the host cell death induced by cell death-inducing proteins. In Plasmopara viticola (Downy mildew of grapevine), this protein is Secreted RxLR effector protein 15.